Reading from the N-terminus, the 410-residue chain is Multifunctional CCA protein (410 aa).

Gly8 and Arg11 together coordinate ATP. CTP-binding residues include Gly8 and Arg11. Residues Asp21 and Asp23 each coordinate Mg(2+). Residues Arg91, Arg137, and Arg140 each contribute to the ATP site. Residues Arg91, Arg137, and Arg140 each contribute to the CTP site. Residues 228–329 (TGVHVLSVLQ…LELLQSFDVY (102 aa)) form the HD domain.

Belongs to the tRNA nucleotidyltransferase/poly(A) polymerase family. Bacterial CCA-adding enzyme type 1 subfamily. In terms of assembly, monomer. Can also form homodimers and oligomers. Requires Mg(2+) as cofactor. Ni(2+) serves as cofactor.

It carries out the reaction a tRNA precursor + 2 CTP + ATP = a tRNA with a 3' CCA end + 3 diphosphate. The enzyme catalyses a tRNA with a 3' CCA end + 2 CTP + ATP = a tRNA with a 3' CCACCA end + 3 diphosphate. In terms of biological role, catalyzes the addition and repair of the essential 3'-terminal CCA sequence in tRNAs without using a nucleic acid template. Adds these three nucleotides in the order of C, C, and A to the tRNA nucleotide-73, using CTP and ATP as substrates and producing inorganic pyrophosphate. tRNA 3'-terminal CCA addition is required both for tRNA processing and repair. Also involved in tRNA surveillance by mediating tandem CCA addition to generate a CCACCA at the 3' terminus of unstable tRNAs. While stable tRNAs receive only 3'-terminal CCA, unstable tRNAs are marked with CCACCA and rapidly degraded. This Pseudomonas aeruginosa (strain LESB58) protein is Multifunctional CCA protein.